Here is a 414-residue protein sequence, read N- to C-terminus: Arrestin domain-containing protein 3 (414 aa).

Short sequence motifs (PPxY motif) lie at residues proline 346–tyrosine 349 and proline 391–tyrosine 394. Residues leucine 393–arginine 414 are disordered. Residues alanine 405–arginine 414 are compositionally biased toward basic and acidic residues.

It belongs to the arrestin family. As to quaternary structure, interacts (via PPxY motifs) with NEDD4 (via WW domains). Interacts with ADRB2. Interacts with ADRB3. Interacts with HGS (via PPxY motifs). Does not bind TXN (thioredoxin). Interacts with ITCH.

The protein localises to the cytoplasm. The protein resides in the cell membrane. Its subcellular location is the lysosome. It localises to the endosome. It is found in the early endosome. In terms of biological role, adapter protein that plays a role in regulating cell-surface expression of adrenergic receptors and probably also other G protein-coupled receptors. Plays a role in NEDD4-mediated ubiquitination and endocytosis af activated ADRB2 and subsequent ADRB2 degradation. May recruit NEDD4 to ADRB2. Alternatively, may function as adapter protein that does not play a major role in recruiting NEDD4 to ADRB2, but rather plays a role in a targeting ADRB2 to endosomes. The protein is Arrestin domain-containing protein 3 (ARRDC3) of Pongo abelii (Sumatran orangutan).